Here is a 280-residue protein sequence, read N- to C-terminus: Energy-coupling factor transporter ATP-binding protein EcfA2 (280 aa).

The ABC transporter domain occupies 3 to 245; the sequence is INLQNVSYTY…VSLLEKKQLG (243 aa). Residue 40–47 coordinates ATP; sequence GHTGSGKS.

This sequence belongs to the ABC transporter superfamily. Energy-coupling factor EcfA family. As to quaternary structure, forms a stable energy-coupling factor (ECF) transporter complex composed of 2 membrane-embedded substrate-binding proteins (S component), 2 ATP-binding proteins (A component) and 2 transmembrane proteins (T component).

Its subcellular location is the cell membrane. Functionally, ATP-binding (A) component of a common energy-coupling factor (ECF) ABC-transporter complex. Unlike classic ABC transporters this ECF transporter provides the energy necessary to transport a number of different substrates. The protein is Energy-coupling factor transporter ATP-binding protein EcfA2 of Streptococcus pyogenes serotype M28 (strain MGAS6180).